The chain runs to 420 residues: Glucose-1-phosphate adenylyltransferase (420 aa).

Alpha-D-glucose 1-phosphate is bound by residues Tyr-107, Gly-173, 188 to 189 (EK), and Ser-206.

This sequence belongs to the bacterial/plant glucose-1-phosphate adenylyltransferase family. As to quaternary structure, homotetramer.

The enzyme catalyses alpha-D-glucose 1-phosphate + ATP + H(+) = ADP-alpha-D-glucose + diphosphate. It functions in the pathway glycan biosynthesis; glycogen biosynthesis. Its function is as follows. Involved in the biosynthesis of ADP-glucose, a building block required for the elongation reactions to produce glycogen. Catalyzes the reaction between ATP and alpha-D-glucose 1-phosphate (G1P) to produce pyrophosphate and ADP-Glc. This chain is Glucose-1-phosphate adenylyltransferase, found in Shewanella sp. (strain MR-4).